A 222-amino-acid polypeptide reads, in one-letter code: Probable septum site-determining protein MinC (222 aa).

This sequence belongs to the MinC family. Interacts with MinD and FtsZ.

Functionally, cell division inhibitor that blocks the formation of polar Z ring septums. Rapidly oscillates between the poles of the cell to destabilize FtsZ filaments that have formed before they mature into polar Z rings. Prevents FtsZ polymerization. The sequence is that of Probable septum site-determining protein MinC from Lysinibacillus sphaericus (strain C3-41).